We begin with the raw amino-acid sequence, 379 residues long: MSQLELETCNLTLVRYPQVAENSALQAWDAADEYLLRELSTMEIAPGPRLIFNDTFGALACGLQAQSPVSISDSYLSQLATRHNLELNGYDADAVTLLDSMADLPDAPALVVMRIPKTIALLEHQLRMLRKVVTPQTRIIAGAKARDIHTSTLQLFERVMGPTKTSLAWKKARLVHCEWAELKVSEQSLTTEWELDGYGYRIQNHANVYSRNGLDIGARFFMQHLPEQIDGKIIDLGCGNGVIGLAALEANPDATVGFFDESYMAVASSQMNVEVNRPQDVERCSFVVNNGLSRVRRDTLQAVLCNPPFHQLQAVTDEIAWQMFMDARRCLQVGGELRIVGNRHLDYFHKLKRLFGNCETIASNTKFAVLRAVKTNSSR.

It belongs to the methyltransferase superfamily. RlmG family.

The protein resides in the cytoplasm. The catalysed reaction is guanosine(1835) in 23S rRNA + S-adenosyl-L-methionine = N(2)-methylguanosine(1835) in 23S rRNA + S-adenosyl-L-homocysteine + H(+). In terms of biological role, specifically methylates the guanine in position 1835 (m2G1835) of 23S rRNA. The polypeptide is Ribosomal RNA large subunit methyltransferase G (Pectobacterium atrosepticum (strain SCRI 1043 / ATCC BAA-672) (Erwinia carotovora subsp. atroseptica)).